The following is a 150-amino-acid chain: Arginine repressor (150 aa).

This sequence belongs to the ArgR family.

Its subcellular location is the cytoplasm. It participates in amino-acid biosynthesis; L-arginine biosynthesis [regulation]. In terms of biological role, regulates arginine biosynthesis genes. This is Arginine repressor from Staphylococcus saprophyticus subsp. saprophyticus (strain ATCC 15305 / DSM 20229 / NCIMB 8711 / NCTC 7292 / S-41).